The sequence spans 246 residues: tRNA (guanine-N(1)-)-methyltransferase (246 aa).

Residues Gly-113 and 133–138 (IGDYVL) contribute to the S-adenosyl-L-methionine site.

Belongs to the RNA methyltransferase TrmD family. Homodimer.

The protein resides in the cytoplasm. The catalysed reaction is guanosine(37) in tRNA + S-adenosyl-L-methionine = N(1)-methylguanosine(37) in tRNA + S-adenosyl-L-homocysteine + H(+). Its function is as follows. Specifically methylates guanosine-37 in various tRNAs. The sequence is that of tRNA (guanine-N(1)-)-methyltransferase from Haemophilus influenzae (strain 86-028NP).